A 141-amino-acid chain; its full sequence is Hydroperoxide reductase (141 aa).

Belongs to the OsmC/Ohr family. In terms of assembly, homodimer.

The protein resides in the cytoplasm. Reduces organic and inorganic peroxide substrates. Protects the cell against oxidative stress. The chain is Hydroperoxide reductase from Mycoplasma genitalium (strain ATCC 33530 / DSM 19775 / NCTC 10195 / G37) (Mycoplasmoides genitalium).